A 540-amino-acid polypeptide reads, in one-letter code: Signal peptide peptidase-like 3 (540 aa).

Positions 1 to 28 are cleaved as a signal peptide; the sequence is MSSFDPPNHRYSALVLILLLLGFSVAAA. Over 29 to 194 the chain is Lumenal; it reads DDVSWTEDSS…LYAPKRPAVD (166 aa). The PA domain maps to 98-172; it reads SHLSSRLDGH…ISKSSGDALN (75 aa). Residues N155 and N172 are each glycosylated (N-linked (GlcNAc...) asparagine). Residues 195-215 traverse the membrane as a helical segment; the sequence is LTAGLLLLMAVGTVVVASLWS. The Cytoplasmic segment spans residues 216 to 250; sequence ELTDPDQANESYSILAKDVSSAGTRKDDPEKEILD. Residues 251–273 traverse the membrane as a helical segment; the sequence is ISVTGAVFFIVTASIFLLLLFYF. Residues 274–276 lie on the Lumenal side of the membrane; it reads MSS. The helical transmembrane segment at 277 to 299 threads the bilayer; the sequence is WFVWVLTIFFCIGGMQGMHNIIM. At 300-321 the chain is on the cytoplasmic side; the sequence is AVILRKCRHLARKSVKLPLLGT. The helical transmembrane segment at 322 to 342 threads the bilayer; the sequence is MSVLSLLVNIVCLAFAVFWFI. Residues 343–347 lie on the Lumenal side of the membrane; sequence KRHTS. Residues 348–368 traverse the membrane as a helical segment; that stretch reads YSWVGQDILGICLMITALQVV. Topologically, residues 369-377 are cytoplasmic; sequence RLPNIKVAT. A helical transmembrane segment spans residues 378–398; that stretch reads VLLCCAFVYDIFWVFISPLIF. Residue D387 is part of the active site. At 399–429 the chain is on the lumenal side; that stretch reads HESVMIVVAQGDSSTGESIPMLLRIPRFFDP. Residues 430–450 traverse the membrane as a helical segment; the sequence is WGGYDMIGFGDILFPGLLISF. D440 is a catalytic residue. Over 451–466 the chain is Cytoplasmic; it reads ASRYDKIKKRVISNGY. A helical transmembrane segment spans residues 467-487; sequence FLWLTIGYGIGLLLTYLGLYL. The Lumenal portion of the chain corresponds to 488-492; the sequence is MDGHG. The helical transmembrane segment at 493 to 513 threads the bilayer; the sequence is QPALLYIVPCTLGLAVILGLV. The short motif at 494 to 496 is the PAL element; it reads PAL. Residues 514-540 are Cytoplasmic-facing; that stretch reads RGELKELWNYGIEESESHTPEDPMPVA.

Belongs to the peptidase A22B family. In terms of processing, glycosylated. As to expression, ubiquitous.

It is found in the endosome membrane. Functionally, intramembrane-cleaving aspartic protease (I-CLiP) that cleaves type II membrane signal peptides in the hydrophobic plane of the membrane. The protein is Signal peptide peptidase-like 3 (SPPL3) of Arabidopsis thaliana (Mouse-ear cress).